Consider the following 430-residue polypeptide: S-adenosylmethionine synthase (430 aa).

Residue H14 participates in ATP binding. D16 serves as a coordination point for Mg(2+). E42 contributes to the K(+) binding site. L-methionine-binding residues include E55 and Q98. The segment at Q98–R108 is flexible loop. ATP contacts are provided by residues D164–K166, K254–F255, D263, R269–K270, A286, and K290. D263 is a binding site for L-methionine. K294 contacts L-methionine.

Belongs to the AdoMet synthase family. Homotetramer; dimer of dimers. It depends on Mg(2+) as a cofactor. Requires K(+) as cofactor.

Its subcellular location is the cytoplasm. The enzyme catalyses L-methionine + ATP + H2O = S-adenosyl-L-methionine + phosphate + diphosphate. Its pathway is amino-acid biosynthesis; S-adenosyl-L-methionine biosynthesis; S-adenosyl-L-methionine from L-methionine: step 1/1. In terms of biological role, catalyzes the formation of S-adenosylmethionine (AdoMet) from methionine and ATP. The overall synthetic reaction is composed of two sequential steps, AdoMet formation and the subsequent tripolyphosphate hydrolysis which occurs prior to release of AdoMet from the enzyme. This is S-adenosylmethionine synthase from Phocaeicola vulgatus (strain ATCC 8482 / DSM 1447 / JCM 5826 / CCUG 4940 / NBRC 14291 / NCTC 11154) (Bacteroides vulgatus).